The primary structure comprises 358 residues: MFDFSIVTNWIHEMLLSVMPEGWAIFIECIAVGVCIVALYAILAIVLIYMERKVCGFFQCRLGPNRVGKWGSIQVICDVLKMLTKEIFTPKDADRFLYNLAPFMVIIASFLTFACIPFNKGAEILNFNVGVFFLLAASSIGVVGILLAGWGSNNKFSLIGAMRSGAQIISYELSVGMSIMTMVVLMGTMQFSEIVEGQADGWFIFKGHIPAVIAFIIYLIAGNAECNRGPFDLPEAESELTAGYHTEYSGMHFGFFYLAEYLNLFIVASVAATIFLGGWMPLHIIGLDGFNAVMDYIPGFIWFFAKAFFVVFLLMWIKWTFPRLRIDQILNLEWKYLVPISMVNLLLMACCVAFGFHF.

A run of 8 helical transmembrane segments spans residues 30–50 (IAVG…LIYM), 96–116 (FLYN…FACI), 129–149 (VGVF…LLAG), 168–188 (IISY…LMGT), 201–221 (GWFI…YLIA), 265–285 (FIVA…LHII), 297–317 (IPGF…LMWI), and 336–356 (YLVP…AFGF).

It belongs to the complex I subunit 1 family. In terms of assembly, NDH-1 is composed of 14 different subunits. Subunits NuoA, H, J, K, L, M, N constitute the membrane sector of the complex.

The protein localises to the cell inner membrane. The enzyme catalyses a quinone + NADH + 5 H(+)(in) = a quinol + NAD(+) + 4 H(+)(out). Its function is as follows. NDH-1 shuttles electrons from NADH, via FMN and iron-sulfur (Fe-S) centers, to quinones in the respiratory chain. The immediate electron acceptor for the enzyme in this species is believed to be ubiquinone. Couples the redox reaction to proton translocation (for every two electrons transferred, four hydrogen ions are translocated across the cytoplasmic membrane), and thus conserves the redox energy in a proton gradient. This subunit may bind ubiquinone. The chain is NADH-quinone oxidoreductase subunit H from Bacteroides thetaiotaomicron (strain ATCC 29148 / DSM 2079 / JCM 5827 / CCUG 10774 / NCTC 10582 / VPI-5482 / E50).